Reading from the N-terminus, the 469-residue chain is Glutamate--tRNA ligase (469 aa).

The 'HIGH' region signature appears at 11–21 (PSPTGFIHLGN). Basic and acidic residues predominate over residues 118–131 (GEKPRYDGTWRPEP). The interval 118-138 (GEKPRYDGTWRPEPGKVLPEP) is disordered. A 'KMSKS' region motif is present at residues 243–247 (KMSKR). Lys-246 serves as a coordination point for ATP.

Belongs to the class-I aminoacyl-tRNA synthetase family. Glutamate--tRNA ligase type 1 subfamily. In terms of assembly, monomer.

It is found in the cytoplasm. The catalysed reaction is tRNA(Glu) + L-glutamate + ATP = L-glutamyl-tRNA(Glu) + AMP + diphosphate. In terms of biological role, catalyzes the attachment of glutamate to tRNA(Glu) in a two-step reaction: glutamate is first activated by ATP to form Glu-AMP and then transferred to the acceptor end of tRNA(Glu). This chain is Glutamate--tRNA ligase, found in Burkholderia thailandensis (strain ATCC 700388 / DSM 13276 / CCUG 48851 / CIP 106301 / E264).